Consider the following 72-residue polypeptide: UPF0154 protein EF_1734 (72 aa).

A helical membrane pass occupies residues 4-26 (GWVVLIAVIALLVGAAGGFFLAR).

The protein belongs to the UPF0154 family.

It is found in the membrane. The chain is UPF0154 protein EF_1734 from Enterococcus faecalis (strain ATCC 700802 / V583).